The primary structure comprises 128 residues: Modulator protein MzrA (128 aa).

Over 1–13 the chain is Cytoplasmic; it reads MLALLRPYLSTRV. The chain crosses the membrane as a helical span at residues 14–34; that stretch reads LCVLVVCFSALMLVAFIPTLF. The Periplasmic segment spans residues 35–128; sequence RNDTALQIRA…RLSLRKQSVG (94 aa).

It belongs to the MzrA family. Interacts with EnvZ.

It is found in the cell inner membrane. Its function is as follows. Modulates the activity of the EnvZ/OmpR two-component regulatory system, probably by directly modulating EnvZ enzymatic activity and increasing stability of phosphorylated OmpR. The polypeptide is Modulator protein MzrA (Erwinia billingiae (strain Eb661)).